The sequence spans 497 residues: Interferon regulatory factor 5 (497 aa).

Residues 12–18 carry the Nuclear localization signal motif; the sequence is PRRVRLK. Residues 14–122 constitute a DNA-binding region (IRF tryptophan pentad repeat); sequence RVRLKPWLVA…QPYKIYEVCS (109 aa). Residues 124 to 178 are disordered; sequence GPAPTESQPTDDYVLGEEEEEEEEELQRMLPGLSITEPALPGPPNAPYSLPKEDT. Residues 137–148 show a composition bias toward acidic residues; that stretch reads VLGEEEEEEEEE. The Nuclear export signal motif lies at 149–159; it reads LQRMLPGLSIT. A Phosphoserine; by TBK1 modification is found at Ser-157. Ser-300 carries the post-translational modification Phosphoserine. Glycyl lysine isopeptide (Lys-Gly) (interchain with G-Cter in ubiquitin) cross-links involve residues Lys-410 and Lys-411. The residue at position 430 (Ser-430) is a Phosphoserine. Phosphoserine; by IKKB is present on Ser-434. A phosphoserine mark is found at Ser-436 and Ser-439. Position 445 is a phosphoserine; by IKKB (Ser-445).

This sequence belongs to the IRF family. As to quaternary structure, homodimer, when phosphorylated. Interacts with TASL (via pLxIS motif); interaction takes place downstream of TLR7, TLR8 or TLR9, leading to its activation. Interacts with MYD88 and TRAF6. Post-translationally, phosphorylation of serine and threonine residues by IKBKB in a C-terminal autoinhibitory region, stimulates dimerization, transport into the nucleus, assembly with the coactivator CBP/EP300 and initiation of transcription. 'Lys-63'-linked polyubiquitination by TRAF6 is required for activation.

The protein resides in the cytoplasm. The protein localises to the nucleus. Maintained as a monomer in an autoinhibited state. Phosphorylation and activation follow the following steps: innate adapter protein TASL recruits IRF5, thereby licensing IRF5 for phosphorylation by IKBKB. Phosphorylated IRF5 dissociates from the adapter proteins, dimerizes, and then enters the nucleus to induce IFNs. In terms of biological role, transcription factor that plays a critical role in innate immunity by activating expression of type I interferon (IFN) IFNA and INFB and inflammatory cytokines downstream of endolysosomal toll-like receptors TLR7, TLR8 and TLR9. Regulates the transcription of type I IFN genes (IFN-alpha and IFN-beta) and IFN-stimulated genes (ISG) by binding to an interferon-stimulated response element (ISRE) in their promoters. Can efficiently activate both the IFN-beta (IFNB) and the IFN-alpha (IFNA) genes and mediate their induction downstream of the TLR-activated, MyD88-dependent pathway. This Mus musculus (Mouse) protein is Interferon regulatory factor 5.